Reading from the N-terminus, the 296-residue chain is 3-methyl-2-oxobutanoate hydroxymethyltransferase (296 aa).

Low complexity predominate over residues 1–14 (MTAPTPTPANAATP). Residues 1 to 29 (MTAPTPTPANAATPYGTLPPASPLPQRRP) form a disordered region. Residues D71 and D114 each coordinate Mg(2+). 3-methyl-2-oxobutanoate is bound by residues 71-72 (DS), D114, and K143. E145 contacts Mg(2+). The Proton acceptor role is filled by E212.

Belongs to the PanB family. As to quaternary structure, homodecamer; pentamer of dimers. Requires Mg(2+) as cofactor.

The protein resides in the cytoplasm. The catalysed reaction is 3-methyl-2-oxobutanoate + (6R)-5,10-methylene-5,6,7,8-tetrahydrofolate + H2O = 2-dehydropantoate + (6S)-5,6,7,8-tetrahydrofolate. It participates in cofactor biosynthesis; (R)-pantothenate biosynthesis; (R)-pantoate from 3-methyl-2-oxobutanoate: step 1/2. Catalyzes the reversible reaction in which hydroxymethyl group from 5,10-methylenetetrahydrofolate is transferred onto alpha-ketoisovalerate to form ketopantoate. The polypeptide is 3-methyl-2-oxobutanoate hydroxymethyltransferase (Paracidovorax citrulli (strain AAC00-1) (Acidovorax citrulli)).